Reading from the N-terminus, the 988-residue chain is MPIRQMKDSSETHLVIKTQPLKHHNPKTVQNGKIPPPSPSPVTVTTPATVTQSQASSPSPPSKNRSRRRNRGGRKSDQGDVCMRPSSRPRKPPPPSQTTSSAVSVATAGEIVAVNHQMQMGVRKNSNFAPRPGFGTLGTKCIVKANHFLADLPTKDLNQYDVTITPEVSSKSVNRAIIAELVRLYKESDLGRRLPAYDGRKSLYTAGELPFTWKEFSVKIVDEDDGIINGPKRERSYKVAIKFVARANMHHLGEFLAGKRADCPQEAVQILDIVLRELSVKRFCPVGRSFFSPDIKTPQRLGEGLESWCGFYQSIRPTQMGLSLNIDMASAAFIEPLPVIEFVAQLLGKDVLSKPLSDSDRVKIKKGLRGVKVEVTHRANVRRKYRVAGLTTQPTRELMFPVDENCTMKSVIEYFQEMYGFTIQHTHLPCLQVGNQKKASYLPMEACKIVEGQRYTKRLNEKQITALLKVTCQRPRDRENDILRTVQHNAYDQDPYAKEFGMNISEKLASVEARILPAPWLKYHENGKEKDCLPQVGQWNMMNKKMINGMTVSRWACVNFSRSVQENVARGFCNELGQMCEVSGMEFNPEPVIPIYSARPDQVEKALKHVYHTSMNKTKGKELELLLAILPDNNGSLYGDLKRICETELGLISQCCLTKHVFKISKQYLANVSLKINVKMGGRNTVLVDAISCRIPLVSDIPTIIFGADVTHPENGEESSPSIAAVVASQDWPEVTKYAGLVCAQAHRQELIQDLYKTWQDPVRGTVSGGMIRDLLISFRKATGQKPLRIIFYRDGVSEGQFYQVLLYELDAIRKACASLEPNYQPPVTFIVVQKRHHTRLFANNHRDKNSTDRSGNILPGTVVDTKICHPTEFDFYLCSHAGIQGTSRPAHYHVLWDENNFTADGIQSLTNNLCYTYARCTRSVSIVPPAYYAHLAAFRARFYLEPEIMQDNGSPGKKNTKTTTVGDVGVKPLPALKENVKRVMFYC.

Basic and acidic residues predominate over residues 1–11 (MPIRQMKDSSE). The disordered stretch occupies residues 1–103 (MPIRQMKDSS…PPSQTTSSAV (103 aa)). Low complexity predominate over residues 41–57 (PVTVTTPATVTQSQASS). The segment covering 64–73 (NRSRRRNRGG) has biased composition (basic residues). A PAZ domain is found at 338 to 451 (PVIEFVAQLL…LPMEACKIVE (114 aa)). One can recognise a Piwi domain in the interval 625–946 (LLLAILPDNN…AAFRARFYLE (322 aa)).

This sequence belongs to the argonaute family. Ago subfamily. As to quaternary structure, interacts with GATA18/HAN and KNAT1/BP. Interacts with RICE1 and RICE2 that act as cofactors. Expressed in roots, stems, leaves, developing embryo, siliques, inflorescences, provascular tissue, shoot apical meristem (SAM) and adaxial (upper) sides of lateral organ primordia. Observed in the floral meristem, the adaxial side of sepal primordia, and the provascular tissue.

The protein localises to the cytoplasm. Functionally, involved in RNA-mediated post-transcriptional gene silencing (PTGS). Main component of the RNA-induced silencing complex (RISC) that binds to a short guide RNA such as a microRNA (miRNA) or small interfering RNA (siRNA). RISC uses the mature miRNA or siRNA as a guide for slicer-directed cleavage of homologous mRNAs to repress gene expression. Required for reliable formation of primary and axillary shoot apical meristems. Specifies leaf adaxial identity by repressing the miR165 and miR166 microRNAs in the embryonic shoot apex, in the shoot apical meristem (SAM) and leaf. Represses the microRNA miR398 which targets CCS1 chaperone mRNAs for translational inhibition. Acts as a negative regulator of AGO1 protein level. Like AGO1, is required for stem cell function and organ polarity. Unlike AGO1, is not subjected to small RNA-mediated repression itself. Essential for multiple processes in development. Coregulates, with GATA18/HAN, the shoot apical meristem (SAM) organization. The sequence is that of Protein argonaute 10 from Arabidopsis thaliana (Mouse-ear cress).